The chain runs to 161 residues: Regulator of ribonuclease activity A (161 aa).

Belongs to the RraA family. Homotrimer. Binds to both RNA-binding sites in the C-terminal region of Rne and to RhlB.

The protein resides in the cytoplasm. Functionally, globally modulates RNA abundance by binding to RNase E (Rne) and regulating its endonucleolytic activity. Can modulate Rne action in a substrate-dependent manner by altering the composition of the degradosome. Modulates RNA-binding and helicase activities of the degradosome. The chain is Regulator of ribonuclease activity A from Shigella boydii serotype 18 (strain CDC 3083-94 / BS512).